The chain runs to 431 residues: Enolase (431 aa).

Glutamine 167 provides a ligand contact to (2R)-2-phosphoglycerate. The Proton donor role is filled by glutamate 209. Mg(2+)-binding residues include aspartate 246, glutamate 289, and aspartate 316. (2R)-2-phosphoglycerate-binding residues include lysine 341, arginine 370, serine 371, and lysine 392. Lysine 341 functions as the Proton acceptor in the catalytic mechanism.

The protein belongs to the enolase family. As to quaternary structure, component of the RNA degradosome, a multiprotein complex involved in RNA processing and mRNA degradation. Mg(2+) is required as a cofactor.

Its subcellular location is the cytoplasm. The protein resides in the secreted. It is found in the cell surface. The enzyme catalyses (2R)-2-phosphoglycerate = phosphoenolpyruvate + H2O. It participates in carbohydrate degradation; glycolysis; pyruvate from D-glyceraldehyde 3-phosphate: step 4/5. Functionally, catalyzes the reversible conversion of 2-phosphoglycerate (2-PG) into phosphoenolpyruvate (PEP). It is essential for the degradation of carbohydrates via glycolysis. The sequence is that of Enolase from Shewanella pealeana (strain ATCC 700345 / ANG-SQ1).